A 487-amino-acid polypeptide reads, in one-letter code: uncharacterized protein (487 aa).

A helical membrane pass occupies residues 7–28 (HVISIFETLGAYFINIFYNFLY). Residues asparagine 73, asparagine 83, and asparagine 195 are each glycosylated (N-linked (GlcNAc...) asparagine; by host). Positions 196-235 (RSLLHQIEELTSEKKSLLADLSTLRKKYEKRQSEYRRLVQ) form a coiled coil. Residues 294 to 305 (TSQELTSKSPNN) are compositionally biased toward polar residues. Residues 294–324 (TSQELTSKSPNNYPVPHSRTIVSKPSDNYPV) form a disordered region. The N-linked (GlcNAc...) asparagine; by host glycan is linked to asparagine 462.

This sequence belongs to the asfivirus B475L family.

It is found in the host membrane. This is an uncharacterized protein from African swine fever virus (isolate Tick/South Africa/Pretoriuskop Pr4/1996) (ASFV).